Reading from the N-terminus, the 99-residue chain is DNA-binding protein HU (99 aa).

The disordered stretch occupies residues 63-82 (HRKEREGRNPKTGAKMKIDA).

This sequence belongs to the bacterial histone-like protein family. In terms of assembly, homodimer.

Its function is as follows. Histone-like DNA-binding protein which is capable of wrapping DNA to stabilize it, and thus to prevent its denaturation under extreme environmental conditions. In Rickettsia prowazekii (strain Madrid E), this protein is DNA-binding protein HU (hup).